The sequence spans 310 residues: Porphobilinogen deaminase (310 aa).

The residue at position 241 (Cys241) is an S-(dipyrrolylmethanemethyl)cysteine.

The protein belongs to the HMBS family. As to quaternary structure, monomer. It depends on dipyrromethane as a cofactor.

The catalysed reaction is 4 porphobilinogen + H2O = hydroxymethylbilane + 4 NH4(+). Its pathway is porphyrin-containing compound metabolism; protoporphyrin-IX biosynthesis; coproporphyrinogen-III from 5-aminolevulinate: step 2/4. Functionally, tetrapolymerization of the monopyrrole PBG into the hydroxymethylbilane pre-uroporphyrinogen in several discrete steps. The chain is Porphobilinogen deaminase from Pelobacter propionicus (strain DSM 2379 / NBRC 103807 / OttBd1).